A 723-amino-acid polypeptide reads, in one-letter code: Probable C-mannosyltransferase DPY19L4 (723 aa).

Residues 1 to 33 (MAEEEGPPVELRQRKKPKSSENKESAKEEKISD) are disordered. The residue at position 2 (A2) is an N-acetylalanine. Positions 18-32 (KSSENKESAKEEKIS) are enriched in basic and acidic residues. A run of 12 helical transmembrane segments spans residues 52–72 (IFIGCLAAVTSGMMYALYLSA), 161–178 (VYFYIGIVFGLQGIYVTA), 184–202 (WLMSGTWLAGMLTVAWFVI), 222–240 (LPYFACQIAALTGYLKSNL), 260–280 (MMMWEYSHYLLFLQAISLFLL), 292–310 (YEVYKIYIFSLFLGYLLQF), 316–337 (LVSPLLSLVAALMLAKCLQLNV), 349–370 (VINFYLVCTLTITLNIIMKMFV), 421–441 (LLPFYILVLIICFLSMLQVIF), 466–486 (IIYHVIHTILLGSLAMVIEGL), 489–509 (IWIPYVCMLAAFGVCSPELWM), and 522–542 (PILLALILSMAVPTIIGLSLW).

This sequence belongs to the dpy-19 family. As to expression, widely expressed.

The protein localises to the membrane. Probable C-mannosyltransferase that mediates C-mannosylation of tryptophan residues on target proteins. This chain is Probable C-mannosyltransferase DPY19L4 (DPY19L4), found in Homo sapiens (Human).